We begin with the raw amino-acid sequence, 66 residues long: Cold shock-like protein CspD (66 aa).

The 60-residue stretch at 4-63 folds into the CSD domain; the sequence is GKVKWFNSEKGFGFIEVEGGDDVFVHFSAIQGDGFKTLEEGQEVSFEIVEGNRGPQAANV.

Homodimer.

It localises to the cytoplasm. This is Cold shock-like protein CspD (cspD) from Bacillus anthracis.